Consider the following 417-residue polypeptide: Serine hydroxymethyltransferase (417 aa).

Residues leucine 120 and glycine 124–leucine 126 each bind (6S)-5,6,7,8-tetrahydrofolate. N6-(pyridoxal phosphate)lysine is present on lysine 229.

Belongs to the SHMT family. In terms of assembly, homodimer. Requires pyridoxal 5'-phosphate as cofactor.

The protein localises to the cytoplasm. The catalysed reaction is (6R)-5,10-methylene-5,6,7,8-tetrahydrofolate + glycine + H2O = (6S)-5,6,7,8-tetrahydrofolate + L-serine. It functions in the pathway one-carbon metabolism; tetrahydrofolate interconversion. It participates in amino-acid biosynthesis; glycine biosynthesis; glycine from L-serine: step 1/1. In terms of biological role, catalyzes the reversible interconversion of serine and glycine with tetrahydrofolate (THF) serving as the one-carbon carrier. This reaction serves as the major source of one-carbon groups required for the biosynthesis of purines, thymidylate, methionine, and other important biomolecules. Also exhibits THF-independent aldolase activity toward beta-hydroxyamino acids, producing glycine and aldehydes, via a retro-aldol mechanism. The sequence is that of Serine hydroxymethyltransferase from Anaeromyxobacter dehalogenans (strain 2CP-1 / ATCC BAA-258).